Here is a 181-residue protein sequence, read N- to C-terminus: MEKIKEIIVVEGKDDLKRIKESFDCTVIETKGFALKIETIKLLKKALKYKGIIILTDSDKSGNIIRQKIVKYLGENNKIKHAYLNTKDTEVESVNKTEIIKILKGVGTLSKDNQKDLLKLSDLLELGIIGENSKENRQKIQKHFCLGDGNSKKLLERLNYFKIKKTDLKNQLALTNSPRRT.

One can recognise a Toprim domain in the interval 5-88 (KEIIVVEGKD…IKHAYLNTKD (84 aa)). Mg(2+) is bound by residues Glu11, Asp57, and Asp59.

This sequence belongs to the ribonuclease M5 family. It depends on Mg(2+) as a cofactor.

The protein resides in the cytoplasm. It catalyses the reaction Endonucleolytic cleavage of RNA, removing 21 and 42 nucleotides, respectively, from the 5'- and 3'-termini of a 5S-rRNA precursor.. Functionally, required for correct processing of both the 5' and 3' ends of 5S rRNA precursor. Cleaves both sides of a double-stranded region yielding mature 5S rRNA in one step. The sequence is that of Ribonuclease M5 from Borreliella burgdorferi (strain ATCC 35210 / DSM 4680 / CIP 102532 / B31) (Borrelia burgdorferi).